A 432-amino-acid chain; its full sequence is Serine hydroxymethyltransferase (432 aa).

Residues leucine 127 and 131–133 each bind (6S)-5,6,7,8-tetrahydrofolate; that span reads GHL. At lysine 236 the chain carries N6-(pyridoxal phosphate)lysine.

The protein belongs to the SHMT family. Homodimer. Pyridoxal 5'-phosphate serves as cofactor.

It is found in the cytoplasm. The catalysed reaction is (6R)-5,10-methylene-5,6,7,8-tetrahydrofolate + glycine + H2O = (6S)-5,6,7,8-tetrahydrofolate + L-serine. The protein operates within one-carbon metabolism; tetrahydrofolate interconversion. It functions in the pathway amino-acid biosynthesis; glycine biosynthesis; glycine from L-serine: step 1/1. Its function is as follows. Catalyzes the reversible interconversion of serine and glycine with tetrahydrofolate (THF) serving as the one-carbon carrier. This reaction serves as the major source of one-carbon groups required for the biosynthesis of purines, thymidylate, methionine, and other important biomolecules. Also exhibits THF-independent aldolase activity toward beta-hydroxyamino acids, producing glycine and aldehydes, via a retro-aldol mechanism. The chain is Serine hydroxymethyltransferase from Rhizobium johnstonii (strain DSM 114642 / LMG 32736 / 3841) (Rhizobium leguminosarum bv. viciae).